The chain runs to 319 residues: Taste receptor type 2 member 30 (319 aa).

A topological domain (extracellular) is located at residue Met1. The helical transmembrane segment at 2–22 (ITFLPIIFSILIVVIFVVGNF) threads the bilayer. At 23-46 (ANGFIALVNSIEWVKRQKISFVDQ) the chain is on the cytoplasmic side. Residues 47–67 (ILTALAVSRVGLLWVLLLHWY) traverse the membrane as a helical segment. The Extracellular segment spans residues 68 to 86 (ATQLNPAFYSVEVRITVYN). Residues 87-107 (VWAVTNHFSSWLATSLSMFYL) form a helical membrane-spanning segment. The Cytoplasmic segment spans residues 108 to 126 (LKIANFSNLIFLRIKRRVK). A helical transmembrane segment spans residues 127–147 (SVVLVILLGPLLFLVCHLFVI). The Extracellular segment spans residues 148 to 178 (NMDETIWTKEYEGNMTWKIKLKSAMYHSNMT). Asn161 and Asn176 each carry an N-linked (GlcNAc...) asparagine glycan. The chain crosses the membrane as a helical span at residues 179–199 (LTILANFVPLTLTLISFLLLI). At 200-229 (CSLCKHLKKMQLHGKGSQDPSTKVHIKALQ) the chain is on the cytoplasmic side. Residues 230–250 (TVTSFLLLCAIYFLSMIISVC) traverse the membrane as a helical segment. Residues 251–259 (NLGRLQKQP) are Extracellular-facing. The chain crosses the membrane as a helical span at residues 260–280 (VFMFCQAIIFSYPSTHPFILI). The Cytoplasmic portion of the chain corresponds to 281-319 (LGNKKLKQIFLSVLWHVRYWVKDRSLRLHRFTRAALCKG).

Belongs to the G-protein coupled receptor T2R family.

The protein localises to the membrane. In terms of biological role, receptor that may play a role in the perception of bitterness and is gustducin-linked. May play a role in sensing the chemical composition of the gastrointestinal content. The activity of this receptor may stimulate alpha gustducin, mediate PLC-beta-2 activation and lead to the gating of TRPM5. The sequence is that of Taste receptor type 2 member 30 (TAS2R30) from Pan paniscus (Pygmy chimpanzee).